The chain runs to 108 residues: Thioredoxin C-2 (108 aa).

In terms of domain architecture, Thioredoxin spans 2–108; that stretch reads SATIVNTTDE…KLAAFIDQNI (107 aa). Cys-33 and Cys-36 are joined by a disulfide.

It belongs to the thioredoxin family.

In terms of biological role, participates in various redox reactions through the reversible oxidation of its active center dithiol to a disulfide and catalyzes dithiol-disulfide exchange reactions. This Corynebacterium nephridii protein is Thioredoxin C-2.